The chain runs to 566 residues: Pyrophosphate--fructose 6-phosphate 1-phosphotransferase subunit beta 1 (566 aa).

Residue S16 is modified to Phosphoserine. Residue G105 coordinates diphosphate. D199 contributes to the Mg(2+) binding site. Substrate-binding positions include 227–229 (TID), 266–267 (KY), 274–276 (MGR), E335, and 440–443 (YEGR). D229 serves as the catalytic Proton acceptor.

This sequence belongs to the phosphofructokinase type A (PFKA) family. PPi-dependent PFK group II subfamily. Clade 'Long' sub-subfamily. Tetramer of two alpha (regulatory) and two beta (catalytic) chains. Mg(2+) is required as a cofactor.

It localises to the cytoplasm. It carries out the reaction beta-D-fructose 6-phosphate + diphosphate = beta-D-fructose 1,6-bisphosphate + phosphate + H(+). The protein operates within carbohydrate degradation; glycolysis; D-glyceraldehyde 3-phosphate and glycerone phosphate from D-glucose: step 3/4. With respect to regulation, allosterically activated by fructose 2,6-bisphosphate. Catalytic subunit of pyrophosphate--fructose 6-phosphate 1-phosphotransferase. Catalyzes the phosphorylation of D-fructose 6-phosphate, the first committing step of glycolysis. Uses inorganic phosphate (PPi) as phosphoryl donor instead of ATP like common ATP-dependent phosphofructokinases (ATP-PFKs), which renders the reaction reversible, and can thus function both in glycolysis and gluconeogenesis. The polypeptide is Pyrophosphate--fructose 6-phosphate 1-phosphotransferase subunit beta 1 (Arabidopsis thaliana (Mouse-ear cress)).